A 492-amino-acid polypeptide reads, in one-letter code: Prostaglandin E2 receptor EP4 subtype (492 aa).

Topologically, residues 1-19 (MSIPGTNASSSQASNPLNS) are extracellular. An N-linked (GlcNAc...) asparagine glycan is attached at Asn7. The chain crosses the membrane as a helical span at residues 20–43 (PVTIPAVMFIFGVVGNLVAIVVLC). At 44-55 (KSRKEQKETTFY) the chain is on the cytoplasmic side. The chain crosses the membrane as a helical span at residues 56–79 (TLVCGLAVTDLLGTLLVSPVTIAT). The Extracellular portion of the chain corresponds to 80-96 (YLKGQWPGGHALCEYST). Cys92 and Cys170 are disulfide-bonded. A helical transmembrane segment spans residues 97–115 (FILLFFGLSGLSIICAMSI). Over 116-135 (ERYLAINHAYFYSHYVDKRL) the chain is Cytoplasmic. The helical transmembrane segment at 136–160 (AGLTLFAVYASNVLFCALPSMGLGS) threads the bilayer. The Extracellular portion of the chain corresponds to 161-184 (SRLQYPATWCFIDWTTNVTAHAAF). The chain crosses the membrane as a helical span at residues 185-211 (SYMYAGFSSFLILATVLCNVLVCGALL). At 212–273 (RMHRQFMRRT…RSFRRIAGAE (62 aa)) the chain is on the cytoplasmic side. A helical transmembrane segment spans residues 274-301 (IQMVILLIATSLVVLICSIPLVVRVFVN). At 302-318 (QLYRPQLEPVIGKNPDL) the chain is on the extracellular side. A helical transmembrane segment spans residues 319–338 (QAIRIASVSPILDPWIYILL). Topologically, residues 339-492 (RKTVLSKAIE…ETLNLSEKCI (154 aa)) are cytoplasmic. The segment covering 361 to 374 (RRERSGPHCSDSRR) has biased composition (basic and acidic residues). The disordered stretch occupies residues 361-383 (RRERSGPHCSDSRRTSSAVSGHS). Ser380, Ser383, Ser385, and Ser388 each carry phosphoserine.

Belongs to the G-protein coupled receptor 1 family. In terms of assembly, interacts with FEM1A. In terms of processing, phosphorylation mediates agonist-mediated desensitization by promoting cytoplasmic retention.

It localises to the cell membrane. Its function is as follows. Receptor for prostaglandin E2 (PGE2). The activity of this receptor is mediated by G(s) proteins that stimulate adenylate cyclase. Has a relaxing effect on smooth muscle. May play an important role in regulating renal hemodynamics, intestinal epithelial transport, adrenal aldosterone secretion, and uterine function. In Bos taurus (Bovine), this protein is Prostaglandin E2 receptor EP4 subtype (PTGER4).